We begin with the raw amino-acid sequence, 365 residues long: Mitogen-activated protein kinase 13 (365 aa).

One can recognise a Protein kinase domain in the interval 25-308; the sequence is YVSPTHVGSG…AAQALTHPFF (284 aa). Position 31–39 (31–39) interacts with ATP; that stretch reads VGSGAYGSV. A Phosphoserine modification is found at serine 47. Lysine 54 contributes to the ATP binding site. Aspartate 150 acts as the Proton acceptor in catalysis. At threonine 180 the chain carries Phosphothreonine; by MAP2K3, MAP2K4, MAP2K6 and MAP2K7. Residues 180 to 182 carry the TXY motif; it reads TGY. Tyrosine 182 carries the post-translational modification Phosphotyrosine; by MAP2K3, MAP2K4, MAP2K6 and MAP2K7. Serine 350 carries the phosphoserine modification.

The protein belongs to the protein kinase superfamily. CMGC Ser/Thr protein kinase family. MAP kinase subfamily. In terms of assembly, interacts with MAPK8IP2. It depends on Mg(2+) as a cofactor. Dually phosphorylated on Thr-180 and Tyr-182 by MAP2K3/MKK3, MAP2K4/MKK4, MAP2K6/MKK6 and MAP2K7/MKK7, which activates the enzyme. Dephosphorylated by dual specificity phosphatase DUSP1. Expressed in testes, pancreas, small intestine, lung and kidney. Abundant in macrophages, also present in neutrophils, CD4+ T-cells, and endothelial cells.

It carries out the reaction L-seryl-[protein] + ATP = O-phospho-L-seryl-[protein] + ADP + H(+). The enzyme catalyses L-threonyl-[protein] + ATP = O-phospho-L-threonyl-[protein] + ADP + H(+). Activated by phosphorylation on threonine and tyrosine by dual specificity kinases, MAP2K3/MKK3, MAP2K6/MKK6, MAP2K4/MKK4 and MAP2K7/MKK7. Activation by ultraviolet radiation, hyperosmotic shock, anisomycin or by TNF-alpha is mediated by MAP2K3/MKK3. Inhibited by dual specificity phosphatase DUSP1. In terms of biological role, serine/threonine kinase which acts as an essential component of the MAP kinase signal transduction pathway. MAPK13 is one of the four p38 MAPKs which play an important role in the cascades of cellular responses evoked by extracellular stimuli such as pro-inflammatory cytokines or physical stress leading to direct activation of transcription factors such as ELK1 and ATF2. Accordingly, p38 MAPKs phosphorylate a broad range of proteins and it has been estimated that they may have approximately 200 to 300 substrates each. MAPK13 is one of the less studied p38 MAPK isoforms. Some of the targets are downstream kinases such as MAPKAPK2, which are activated through phosphorylation and further phosphorylate additional targets. Plays a role in the regulation of protein translation by phosphorylating and inactivating EEF2K. Involved in cytoskeletal remodeling through phosphorylation of MAPT and STMN1. Mediates UV irradiation induced up-regulation of the gene expression of CXCL14. Plays an important role in the regulation of epidermal keratinocyte differentiation, apoptosis and skin tumor development. Phosphorylates the transcriptional activator MYB in response to stress which leads to rapid MYB degradation via a proteasome-dependent pathway. MAPK13 also phosphorylates and down-regulates PRKD1 during regulation of insulin secretion in pancreatic beta cells. In Homo sapiens (Human), this protein is Mitogen-activated protein kinase 13 (MAPK13).